The chain runs to 181 residues: ADP-ribosylation factor 1 (181 aa).

Glycine 2 carries the N-acetylglycine; alternate modification. A lipid anchor (N-myristoyl glycine; alternate) is attached at glycine 2. The interval 3-16 (NIFANLFKGLFGKK) is important for the stable binding to the membranes. GTP-binding positions include 24–32 (GLDAAGKTT), 126–129 (NKQD), and alanine 160.

The protein belongs to the small GTPase superfamily. Arf family. In terms of assembly, interacts (when activated) with GGA1, GGA2 and GGA3; the interaction is required for proper subcellular location of GGA1, GGA2 and GGA3. Interacts with ARHGAP21, ASAP2, GGA1, HERC1, PRKCABP, PIP5K1B, TMED2, PSCD2, TMED10 and GRIA2. Interacts with ARFGAP1, which hydrolyzes GTP and thus, regulates its function. Interacts with PI4KB in the Golgi complex. Interacts with NCS1/FREQ in the Golgi and at the plasma membrane. Interacts with PLEKHA3. Interacts with PLEKHA8; the interaction, together with phosphatidylinositol 4-phosphate binding, is required for FAPP2-mediated glucosylceramide transfer activity. Interacts (activated) with PICK1 (via PDZ domain); the interaction blocks Arp2/3 complex inhibition. Interacts with IQSEC1. Interacts with C9orf72.

Its subcellular location is the golgi apparatus membrane. It localises to the synapse. It is found in the synaptosome. The protein localises to the postsynaptic density. It catalyses the reaction GTP + H2O = GDP + phosphate + H(+). With respect to regulation, alternates between an inactive GDP-bound form and an active GTP-bound form. Activated by guanine nucleotide-exchange factors (GEFs) and inactivated by GTPase-activating proteins (GAPs). In terms of biological role, small GTPase involved in protein trafficking between different compartments. Modulates vesicle budding and uncoating within the Golgi complex. In its GTP-bound form, triggers the recruitment of coatomer proteins to the Golgi membrane. The hydrolysis of ARF1-bound GTP, which is mediated by ARFGAPs proteins, is required for dissociation of coat proteins from Golgi membranes and vesicles. The GTP-bound form interacts with PICK1 to limit PICK1-mediated inhibition of Arp2/3 complex activity; the function is linked to AMPA receptor (AMPAR) trafficking, regulation of synaptic plasticity of excitatory synapses and spine shrinkage during long-term depression (LTD). Plays a key role in the regulation of intestinal stem cells and gut microbiota, and is essential for maintaining intestinal homeostasis. Also plays a critical role in mast cell expansion but not in mast cell maturation by facilitating optimal mTORC1 activation. This Bos taurus (Bovine) protein is ADP-ribosylation factor 1 (ARF1).